We begin with the raw amino-acid sequence, 247 residues long: Carboxy-S-adenosyl-L-methionine synthase (247 aa).

S-adenosyl-L-methionine-binding positions include Tyr39, 64-66 (GCS), 89-90 (DN), 117-118 (DI), Asn132, and Arg199.

The protein belongs to the class I-like SAM-binding methyltransferase superfamily. Cx-SAM synthase family. Homodimer.

The enzyme catalyses prephenate + S-adenosyl-L-methionine = carboxy-S-adenosyl-L-methionine + 3-phenylpyruvate + H2O. Catalyzes the conversion of S-adenosyl-L-methionine (SAM) to carboxy-S-adenosyl-L-methionine (Cx-SAM). The protein is Carboxy-S-adenosyl-L-methionine synthase of Pectobacterium atrosepticum (strain SCRI 1043 / ATCC BAA-672) (Erwinia carotovora subsp. atroseptica).